Here is a 160-residue protein sequence, read N- to C-terminus: Transcriptional regulator MraZ (160 aa).

2 SpoVT-AbrB domains span residues 5–50 and 93–136; these read KFDT…GDQV and AVEC…SQAV.

It belongs to the MraZ family. As to quaternary structure, forms oligomers.

It localises to the cytoplasm. Its subcellular location is the nucleoid. The polypeptide is Transcriptional regulator MraZ (Geobacter sp. (strain M21)).